A 192-amino-acid polypeptide reads, in one-letter code: MAREPREGGRGGRDREREGDDLVDKLVTINRVAKVVKGGRRFAFAALVVVGDQKGRVGYGAGKAREVPEAIRKATDRAKRAMIRVPMKEGRTLHHDVAGHFGAGKVVLRSADAGTGIIAGGPMRAVFESLGINDVVAKSLGTRNPHNMVKATFAALERCASPRTVANRRGKKVSDILGRRDVAGTGEAAADV.

Residues 22–85 (LVDKLVTINR…DRAKRAMIRV (64 aa)) enclose the S5 DRBM domain.

The protein belongs to the universal ribosomal protein uS5 family. In terms of assembly, part of the 30S ribosomal subunit. Contacts proteins S4 and S8.

In terms of biological role, with S4 and S12 plays an important role in translational accuracy. Located at the back of the 30S subunit body where it stabilizes the conformation of the head with respect to the body. The chain is Small ribosomal subunit protein uS5 from Gluconacetobacter diazotrophicus (strain ATCC 49037 / DSM 5601 / CCUG 37298 / CIP 103539 / LMG 7603 / PAl5).